The primary structure comprises 234 residues: Sugar fermentation stimulation protein homolog (234 aa).

The protein belongs to the SfsA family.

The sequence is that of Sugar fermentation stimulation protein homolog from Enterobacter sp. (strain 638).